Consider the following 247-residue polypeptide: Probable transcriptional regulatory protein DvMF_3201 (247 aa).

Residues 1–21 (MAGHSKWANIQHRKGRQDAKR) are disordered.

The protein belongs to the TACO1 family.

It is found in the cytoplasm. This Nitratidesulfovibrio vulgaris (strain DSM 19637 / Miyazaki F) (Desulfovibrio vulgaris) protein is Probable transcriptional regulatory protein DvMF_3201.